Consider the following 478-residue polypeptide: Chromosomal replication initiator protein DnaA (478 aa).

A domain I, interacts with DnaA modulators region spans residues 1–82; the sequence is MHTMNKTAES…ELGKNAKLLY (82 aa). The interval 82 to 140 is domain II; that stretch reads YKIKMENTYGNKLPFTEQLPSAHRSPVRTQEIDVPVQQKNPELRNPFIIPGIRNLKIES. A domain III, AAA+ region region spans residues 141-358; the sequence is QLNANYSFDN…GAIISLIAQS (218 aa). ATP-binding residues include glycine 186, glycine 188, lysine 189, and threonine 190. The tract at residues 359–478 is domain IV, binds dsDNA; it reads SFNKKEVTLE…VDDINKKLSL (120 aa).

It belongs to the DnaA family. As to quaternary structure, oligomerizes as a right-handed, spiral filament on DNA at oriC.

The protein resides in the cytoplasm. Its function is as follows. Plays an essential role in the initiation and regulation of chromosomal replication. ATP-DnaA binds to the origin of replication (oriC) to initiate formation of the DNA replication initiation complex once per cell cycle. Binds the DnaA box (a 9 base pair repeat at the origin) and separates the double-stranded (ds)DNA. Forms a right-handed helical filament on oriC DNA; dsDNA binds to the exterior of the filament while single-stranded (ss)DNA is stabiized in the filament's interior. The ATP-DnaA-oriC complex binds and stabilizes one strand of the AT-rich DNA unwinding element (DUE), permitting loading of DNA polymerase. After initiation quickly degrades to an ADP-DnaA complex that is not apt for DNA replication. Binds acidic phospholipids. The protein is Chromosomal replication initiator protein DnaA of Flavobacterium psychrophilum (strain ATCC 49511 / DSM 21280 / CIP 103535 / JIP02/86).